The following is a 275-amino-acid chain: 3-methyl-2-oxobutanoate hydroxymethyltransferase (275 aa).

D49 and D88 together coordinate Mg(2+). Residues 49-50 (DS), D88, and K118 contribute to the 3-methyl-2-oxobutanoate site. Residue E120 coordinates Mg(2+). The active-site Proton acceptor is E187.

It belongs to the PanB family. In terms of assembly, homodecamer; pentamer of dimers. Mg(2+) serves as cofactor.

Its subcellular location is the cytoplasm. It carries out the reaction 3-methyl-2-oxobutanoate + (6R)-5,10-methylene-5,6,7,8-tetrahydrofolate + H2O = 2-dehydropantoate + (6S)-5,6,7,8-tetrahydrofolate. It participates in cofactor biosynthesis; (R)-pantothenate biosynthesis; (R)-pantoate from 3-methyl-2-oxobutanoate: step 1/2. Catalyzes the reversible reaction in which hydroxymethyl group from 5,10-methylenetetrahydrofolate is transferred onto alpha-ketoisovalerate to form ketopantoate. This is 3-methyl-2-oxobutanoate hydroxymethyltransferase from Bordetella petrii (strain ATCC BAA-461 / DSM 12804 / CCUG 43448).